The primary structure comprises 56 residues: Large ribosomal subunit protein eL24 (56 aa).

4 residues coordinate Zn(2+): Cys6, Cys9, Cys32, and Cys36. A C4-type zinc finger spans residues 6 to 36 (CSFCNTRITPGTGKLYAKKDGTVYYFCSSKC).

This sequence belongs to the eukaryotic ribosomal protein eL24 family. As to quaternary structure, part of the 50S ribosomal subunit. Forms a cluster with proteins L3 and L14. Zn(2+) serves as cofactor.

In terms of biological role, binds to the 23S rRNA. This is Large ribosomal subunit protein eL24 from Methanothrix thermoacetophila (strain DSM 6194 / JCM 14653 / NBRC 101360 / PT) (Methanosaeta thermophila).